The primary structure comprises 308 residues: Glycine--tRNA ligase alpha subunit (308 aa).

The protein belongs to the class-II aminoacyl-tRNA synthetase family. As to quaternary structure, tetramer of two alpha and two beta subunits.

Its subcellular location is the cytoplasm. It catalyses the reaction tRNA(Gly) + glycine + ATP = glycyl-tRNA(Gly) + AMP + diphosphate. This is Glycine--tRNA ligase alpha subunit from Brevibacillus brevis (strain 47 / JCM 6285 / NBRC 100599).